The following is a 464-amino-acid chain: Mothers against decapentaplegic homolog 5 (464 aa).

In terms of domain architecture, MH1 spans 13-137 (PAVKRLLGWK…YKRVESPVLP (125 aa)). The Zn(2+) site is built by cysteine 65, cysteine 110, cysteine 122, and histidine 127. The disordered stretch occupies residues 166-258 (HMPLNATFPE…LAPQNMPRGD (93 aa)). The span at 173–183 (FPESFQQHSGG) shows a compositional bias: polar residues. Low complexity predominate over residues 199–216 (ASSGTYPNSPASSGPSSP). The span at 237 to 251 (QDGSQSMETGSSLAP) shows a compositional bias: polar residues. The region spanning 270–464 (WCSIVYYELN…SPLNPISSVS (195 aa)) is the MH2 domain.

This sequence belongs to the dwarfin/SMAD family. As to quaternary structure, may form trimers with the co-SMAD SMAD4.

The protein localises to the cytoplasm. It localises to the nucleus. Involved in ventralization. May mediate Bmp2b signaling during early phases of embryonic dorsal-ventral pattern formation. Required for initiation of Smad1 expression during gastrulation. This chain is Mothers against decapentaplegic homolog 5 (smad5), found in Danio rerio (Zebrafish).